Consider the following 235-residue polypeptide: Octanoyltransferase (235 aa).

A BPL/LPL catalytic domain is found at Lys-52–Asn-229. Residues Arg-89–His-96, Ala-159–Gly-161, and Gly-172–Ala-174 contribute to the substrate site. Catalysis depends on Cys-190, which acts as the Acyl-thioester intermediate.

It belongs to the LipB family.

It localises to the cytoplasm. It catalyses the reaction octanoyl-[ACP] + L-lysyl-[protein] = N(6)-octanoyl-L-lysyl-[protein] + holo-[ACP] + H(+). Its pathway is protein modification; protein lipoylation via endogenous pathway; protein N(6)-(lipoyl)lysine from octanoyl-[acyl-carrier-protein]: step 1/2. Its function is as follows. Catalyzes the transfer of endogenously produced octanoic acid from octanoyl-acyl-carrier-protein onto the lipoyl domains of lipoate-dependent enzymes. Lipoyl-ACP can also act as a substrate although octanoyl-ACP is likely to be the physiological substrate. This is Octanoyltransferase from Tropheryma whipplei (strain Twist) (Whipple's bacillus).